The sequence spans 5386 residues: Nonribosomal peptide synthetase 2 (5386 aa).

The tract at residues 45-435 (HDANAIDFLE…QGLLECLGRV (391 aa)) is adenylation 1. A Carrier 1 domain is found at 544-617 (SPKDPIGHSV…DLIEVCRESK (74 aa)). Position 578 is an O-(pantetheine 4'-phosphoryl)serine (S578). Residues 652–1059 (LPCTPLQEAM…VDADRHVSAI (408 aa)) are condensation 1. The tract at residues 1089-1482 (EKWAATDPHR…GRTDDQVKIR (394 aa)) is adenylation 2. The region spanning 1611–1688 (ELLSQWERDV…SLASLKKLQS (78 aa)) is the Carrier 2 domain. Position 1648 is an O-(pantetheine 4'-phosphoryl)serine (S1648). The segment at 1731-2141 (ILPCTPLQEA…ALSADTDMFP (411 aa)) is condensation 2. The segment at 2166-2551 (FERTALLHPD…GRLDDQVKIR (386 aa)) is adenylation 3. Residues 2652–2725 (SKTESEVRNI…DLAEHLDQIS (74 aa)) enclose the Carrier 3 domain. S2686 carries the O-(pantetheine 4'-phosphoryl)serine modification. Residues 2763–3174 (RPCTPLQNGM…HSQIPLAKTD (412 aa)) form a condensation 3 region. The interval 3202–3603 (EKTAQEHPQR…GRADDQVKLR (402 aa)) is adenylation 4. One can recognise a Carrier 4 domain in the interval 3728–3805 (EQWSKQEEKL…RLAKSLAANS (78 aa)). S3765 carries the O-(pantetheine 4'-phosphoryl)serine modification. Positions 3846-4250 (LAPCTPLQQG…LDQAINDPSA (405 aa)) are condensation 4. The Carrier 5 domain maps to 4281–4357 (FEWSDNAIAI…KMAQNMSMKN (77 aa)). Position 4318 is an O-(pantetheine 4'-phosphoryl)serine (S4318). The condensation 5 stretch occupies residues 4391–4802 (EEILPLTPLQ…ERAEAPVIDM (412 aa)). Residues 4821-4842 (HTGSGHVESGEDDGQDTPSTET) form a disordered region. Residues 4840–4913 (TETTNRIRKI…KMAKLADARA (74 aa)) form the Carrier 6 domain. Residue S4874 is modified to O-(pantetheine 4'-phosphoryl)serine. The condensation 6 stretch occupies residues 4952–5257 (QMLPVTAGQL…VQAHLRHLND (306 aa)).

It belongs to the NRP synthetase family.

It functions in the pathway siderophore biosynthesis. Its function is as follows. Nonribosomal peptide synthetase; part of the gene cluster that mediates the biosynthesis of hydroxamate-containing siderophores that play a critical role in virulence. Cochliobolus heterostrophus produces extracellular coprogen-type siderophores including coprogen, neocoprogen I and neocoprogen II, as well as the intracellular siderophore ferricrocin. The role of extracellular siderophores is to supply iron to the fungus during plant infection, and the intracellular ferricrocin is required for intracellular iron distribution and storage with a crucial role in ascus and ascospore development. SIDA2 catalyzes the conversion of L-ornithine to N(5)-hydroxyornithine, the first step in the biosynthesis of all hydroxamate-containing siderophores. The assembly of extracellular coprogen-type siderophores is then performed by the nonribosomal peptide synthetase (NRPS) NPS6 whereas the intracellular siderophore ferricrocin is assembled by NPS2. This is Nonribosomal peptide synthetase 2 from Cochliobolus heterostrophus (strain C4 / ATCC 48331 / race T) (Southern corn leaf blight fungus).